We begin with the raw amino-acid sequence, 317 residues long: 2,3-dihydroxyphenylpropionate/2,3-dihydroxicinnamic acid 1,2-dioxygenase (317 aa).

Catalysis depends on H115, which acts as the Proton donor. The active-site Proton acceptor is H179.

This sequence belongs to the LigB/MhpB extradiol dioxygenase family. Homotetramer. Requires Fe(2+) as cofactor.

The catalysed reaction is 3-(2,3-dihydroxyphenyl)propanoate + O2 = (2Z,4E)-2-hydroxy-6-oxonona-2,4-dienedioate + H(+). It carries out the reaction (2E)-3-(2,3-dihydroxyphenyl)prop-2-enoate + O2 = (2Z,4E,7E)-2-hydroxy-6-oxonona-2,4,7-trienedioate + H(+). The protein operates within aromatic compound metabolism; 3-phenylpropanoate degradation. Its function is as follows. Catalyzes the non-heme iron(II)-dependent oxidative cleavage of 2,3-dihydroxyphenylpropionic acid and 2,3-dihydroxicinnamic acid into 2-hydroxy-6-ketononadienedioate and 2-hydroxy-6-ketononatrienedioate, respectively. This is 2,3-dihydroxyphenylpropionate/2,3-dihydroxicinnamic acid 1,2-dioxygenase from Burkholderia vietnamiensis (strain G4 / LMG 22486) (Burkholderia cepacia (strain R1808)).